We begin with the raw amino-acid sequence, 285 residues long: Bifunctional protein FolD (285 aa).

NADP(+) is bound by residues 169 to 171 (GRS), Ser194, and Ile235.

The protein belongs to the tetrahydrofolate dehydrogenase/cyclohydrolase family. Homodimer.

The catalysed reaction is (6R)-5,10-methylene-5,6,7,8-tetrahydrofolate + NADP(+) = (6R)-5,10-methenyltetrahydrofolate + NADPH. The enzyme catalyses (6R)-5,10-methenyltetrahydrofolate + H2O = (6R)-10-formyltetrahydrofolate + H(+). It functions in the pathway one-carbon metabolism; tetrahydrofolate interconversion. Catalyzes the oxidation of 5,10-methylenetetrahydrofolate to 5,10-methenyltetrahydrofolate and then the hydrolysis of 5,10-methenyltetrahydrofolate to 10-formyltetrahydrofolate. This chain is Bifunctional protein FolD, found in Microcystis aeruginosa (strain NIES-843 / IAM M-2473).